We begin with the raw amino-acid sequence, 249 residues long: Triosephosphate isomerase (249 aa).

Residues Asn-10 and Lys-12 each coordinate substrate. His-94 serves as the catalytic Electrophile. Residue Glu-166 is the Proton acceptor of the active site.

Belongs to the triosephosphate isomerase family. Homodimer.

It carries out the reaction D-glyceraldehyde 3-phosphate = dihydroxyacetone phosphate. It participates in carbohydrate biosynthesis; gluconeogenesis. Its pathway is carbohydrate degradation; glycolysis; D-glyceraldehyde 3-phosphate from glycerone phosphate: step 1/1. The sequence is that of Triosephosphate isomerase (tpiA) from Emericella nidulans (strain FGSC A4 / ATCC 38163 / CBS 112.46 / NRRL 194 / M139) (Aspergillus nidulans).